A 433-amino-acid chain; its full sequence is MSQTNTTDVTAYMQNVGKEARAASRALAAANTGDKNAALMAIHDVLKNAKQDILAANTVDMDNGQKNDLDAALLDRLELNDARFDGMLQGLKDVAALPDPIGEVTDMTYRPSGIHLGKMRVPLGVVGMIYESRPNVTLEAASLALKSGNAIILRGGSEAFESNQAIAKCILEGLKNVGMSEYSVQVLETTDRAAVGELITMTEYVDVIVPRGGKGLIERISRDARVPVIKHLDGNCHTFIDSDADPEIAINVSVNAKTHRYGTCNTMETLLVDEAIADELLPKIAEAIVEADNAMQLRLDDKAQAILNDNTILKGHLSAATAEDWDTEYLAPILAIKILSGIDEAIEHINTHGSHHTDVIITDNYTKSQRFIREVDSASVMINASSRFADGFEYGLGAEIGISTDKIHARGPVGLEGLTSQKWIVYGHGETRA.

The protein belongs to the gamma-glutamyl phosphate reductase family.

The protein localises to the cytoplasm. It catalyses the reaction L-glutamate 5-semialdehyde + phosphate + NADP(+) = L-glutamyl 5-phosphate + NADPH + H(+). The protein operates within amino-acid biosynthesis; L-proline biosynthesis; L-glutamate 5-semialdehyde from L-glutamate: step 2/2. Functionally, catalyzes the NADPH-dependent reduction of L-glutamate 5-phosphate into L-glutamate 5-semialdehyde and phosphate. The product spontaneously undergoes cyclization to form 1-pyrroline-5-carboxylate. In Psychrobacter cryohalolentis (strain ATCC BAA-1226 / DSM 17306 / VKM B-2378 / K5), this protein is Gamma-glutamyl phosphate reductase.